The primary structure comprises 361 residues: D-alanine--D-alanine ligase (361 aa).

The ATP-grasp domain maps to 134–344 (KLLLKSFDIP…FKDLVDNLID (211 aa)). 167-222 (KEVLGYPVIVKPAVLGSSIGINVAYSENQIESFIKEALKYDLTIVIEKFIEAREIE) contributes to the ATP binding site. Positions 297, 311, and 313 each coordinate Mg(2+).

It belongs to the D-alanine--D-alanine ligase family. It depends on Mg(2+) as a cofactor. Mn(2+) is required as a cofactor.

It is found in the cytoplasm. The enzyme catalyses 2 D-alanine + ATP = D-alanyl-D-alanine + ADP + phosphate + H(+). It functions in the pathway cell wall biogenesis; peptidoglycan biosynthesis. Functionally, cell wall formation. This chain is D-alanine--D-alanine ligase, found in Borreliella burgdorferi (strain ATCC 35210 / DSM 4680 / CIP 102532 / B31) (Borrelia burgdorferi).